The primary structure comprises 810 residues: Leucine--tRNA ligase (810 aa).

The 'HIGH' region motif lies at 41–52; it reads PYPSGQGLHVGH. The 'KMSKS' region signature appears at 582-586; that stretch reads KMSKS. Lys-585 contacts ATP.

It belongs to the class-I aminoacyl-tRNA synthetase family.

Its subcellular location is the cytoplasm. The catalysed reaction is tRNA(Leu) + L-leucine + ATP = L-leucyl-tRNA(Leu) + AMP + diphosphate. The protein is Leucine--tRNA ligase of Oenococcus oeni (strain ATCC BAA-331 / PSU-1).